The chain runs to 109 residues: MYSFHISATLGASLYCRSNHFEALEIDSWESSNVFNLVVNCSEEKGIPSILILDYCFLQIFYLFVKTFFACTYIIMLAFQVYIFLKEKNNFFIFRYKTEPLYILRWLRS.

The chain crosses the membrane as a helical span at residues 63-85; the sequence is LFVKTFFACTYIIMLAFQVYIFL.

The protein resides in the membrane. This is an uncharacterized protein from Saccharomyces cerevisiae (strain ATCC 204508 / S288c) (Baker's yeast).